We begin with the raw amino-acid sequence, 104 residues long: Nucleoid-associated protein OB0030 (104 aa).

The interval 1 to 23 (MKGNMNNMMKQMQKMQKKMMQAQ) is disordered.

The protein belongs to the YbaB/EbfC family. As to quaternary structure, homodimer.

The protein localises to the cytoplasm. It localises to the nucleoid. Its function is as follows. Binds to DNA and alters its conformation. May be involved in regulation of gene expression, nucleoid organization and DNA protection. The sequence is that of Nucleoid-associated protein OB0030 from Oceanobacillus iheyensis (strain DSM 14371 / CIP 107618 / JCM 11309 / KCTC 3954 / HTE831).